A 97-amino-acid polypeptide reads, in one-letter code: Small ribosomal subunit protein bS20 (97 aa).

The protein belongs to the bacterial ribosomal protein bS20 family.

Binds directly to 16S ribosomal RNA. In Prochlorococcus marinus (strain MIT 9215), this protein is Small ribosomal subunit protein bS20.